The chain runs to 994 residues: Phosphoenolpyruvate carboxylase (994 aa).

The segment at 1-66 (MKSSGSARAT…QGRTREDKDR (66 aa)) is disordered. 2 stretches are compositionally biased toward low complexity: residues 14–25 (AVSSSSAPAHAE) and 41–54 (AAARPLAPTNAASA). Residues H204 and K646 contribute to the active site.

Belongs to the PEPCase type 1 family. Mg(2+) serves as cofactor.

The enzyme catalyses oxaloacetate + phosphate = phosphoenolpyruvate + hydrogencarbonate. Forms oxaloacetate, a four-carbon dicarboxylic acid source for the tricarboxylic acid cycle. The sequence is that of Phosphoenolpyruvate carboxylase from Burkholderia pseudomallei (strain 668).